The sequence spans 309 residues: Taste receptor type 2 member 43 (309 aa).

Position 1 (Met1) is a topological domain, extracellular. A helical membrane pass occupies residues 2 to 22; the sequence is ITFLPIIFSSLVVVTFVIGNF. Residues 23-46 are Cytoplasmic-facing; that stretch reads ANGFIALVNSIEWFKRQKISFADQ. The helical transmembrane segment at 47–67 threads the bilayer; it reads ILTALAVSRVGLLWVLLLNWY. Topologically, residues 68–86 are extracellular; sequence STVLNPAFNSVEVRTTAYN. Residues 87–107 form a helical membrane-spanning segment; that stretch reads IWAVINHFSNWLATTLSIFYL. The Cytoplasmic portion of the chain corresponds to 108–126; it reads LKIANFSNFIFLHLKRRVK. A helical membrane pass occupies residues 127–147; that stretch reads SVILVMLLGPLLFLACHLFVI. The Extracellular segment spans residues 148 to 178; sequence NMNEIVRTKEFEGNMTWKIKLKSAMYFSNMT. 2 N-linked (GlcNAc...) asparagine glycosylation sites follow: Asn161 and Asn176. A helical transmembrane segment spans residues 179-199; the sequence is VTMVANLVPFTLTLLSFMLLI. Residues 200–229 lie on the Cytoplasmic side of the membrane; the sequence is CSLCKHLKKMQLHGKGSQDPSTKVHIKALQ. The chain crosses the membrane as a helical span at residues 230 to 250; that stretch reads TVISFLLLCAIYFLSIMISVW. Residues 251-259 are Extracellular-facing; sequence SFGSLENKP. A helical membrane pass occupies residues 260–280; that stretch reads VFMFCKAIRFSYPSIHPFILI. The Cytoplasmic portion of the chain corresponds to 281–309; sequence WGNKKLKQTFLSVFWQMRYWVKGEKTSSP.

The protein belongs to the G-protein coupled receptor T2R family. In terms of tissue distribution, expressed in subsets of taste receptor cells of the tongue and exclusively in gustducin-positive cells. Expressed in airway epithelia.

Its subcellular location is the membrane. The protein resides in the cell projection. It is found in the cilium membrane. Functionally, gustducin-coupled receptor immplicated in the perception of bitter compounds in the oral cavity and the gastrointestinal tract. Signals through PLCB2 and the calcium-regulated cation channel TRPM5. Activated by the sulfonyl amide sweeteners saccharin and acesulfame K. In airway epithelial cells, binding of bitter compounds increases the intracellular calcium ion concentration and stimulates ciliary beat frequency. May act as chemosensory receptors in airway epithelial cells to detect and eliminate potential noxious agents from the airways. The polypeptide is Taste receptor type 2 member 43 (TAS2R43) (Homo sapiens (Human)).